Consider the following 1403-residue polypeptide: Sushi, nidogen and EGF-like domain-containing protein 1 (1403 aa).

The N-terminal stretch at 1–24 (MRRGAAWALLLAAALGLGARGVRA) is a signal peptide. The NIDO domain maps to 103–258 (AFWADVDNRR…GRWAFRIDDA (156 aa)). EGF-like domains follow at residues 268–309 (TTSV…RRCH), 311–347 (DVNE…PTCE), and 349–385 (AQSP…ATCE). Cystine bridges form between Cys272–Cys284, Cys278–Cys297, Cys299–Cys308, Cys315–Cys326, Cys320–Cys335, Cys337–Cys346, Cys353–Cys364, Cys358–Cys373, Cys375–Cys384, Cys391–Cys402, Cys396–Cys411, Cys413–Cys422, Cys433–Cys444, Cys438–Cys453, Cys455–Cys464, Cys472–Cys480, Cys474–Cys488, and Cys490–Cys499. Asn292 is a glycosylation site (N-linked (GlcNAc...) asparagine). Positions 387 to 423 (DVDECSSDPCLNGGSCVDLVGNYSCICVEPFEGPQCE) constitute an EGF-like 4; calcium-binding domain. Asn408 is a glycosylation site (N-linked (GlcNAc...) asparagine). 2 consecutive EGF-like domains span residues 429 to 465 (VPSP…LDCR) and 468 to 500 (ILND…LLCE). Asn484 carries an N-linked (GlcNAc...) asparagine glycan. A glycan (N-linked (GlcNAc...) asparagine) is linked at Asn536. 4 consecutive EGF-like domains span residues 541–577 (LPSP…RHCE), 580–616 (RPHL…RHCE), 619–655 (KPDS…RHCE), and 657–693 (APSP…HRCQ). 26 cysteine pairs are disulfide-bonded: Cys545–Cys556, Cys550–Cys565, Cys567–Cys576, Cys584–Cys595, Cys589–Cys604, Cys606–Cys615, Cys623–Cys634, Cys628–Cys643, Cys645–Cys654, Cys661–Cys672, Cys666–Cys681, Cys683–Cys692, Cys698–Cys739, Cys724–Cys751, Cys757–Cys768, Cys762–Cys777, Cys779–Cys788, Cys795–Cys806, Cys800–Cys815, Cys817–Cys826, Cys833–Cys844, Cys838–Cys853, Cys855–Cys864, Cys871–Cys882, Cys876–Cys891, and Cys893–Cys902. In terms of domain architecture, Sushi spans 696–753 (VDCGQPEEVKHATMRLNGTRMGSVALYTCDPGFSLSVLSHMRVCQPQGVWSQPPQCIE). The N-linked (GlcNAc...) asparagine glycan is linked to Asn712. The 37-residue stretch at 753–789 (EVDECQSQPCLHKGSCQDLIAGYQCLCSPGYEGVHCE) folds into the EGF-like 11; calcium-binding domain. Positions 791–827 (ETDECQAQPCRNGGSCRDLPGAFICQCPEGFVGTHCE) constitute an EGF-like 12; calcium-binding domain. EGF-like domains are found at residues 829-865 (EVDA…YNCE) and 867-903 (VSDP…KDCT). N-linked (GlcNAc...) asparagine glycosylation is present at Asn886. 3 consecutive Fibronectin type-III domains span residues 908–1006 (PPTA…TRPR), 1007–1105 (PIED…TRPL), and 1106–1200 (PPAN…SPRD). N-linked (GlcNAc...) asparagine glycosylation is found at Asn977, Asn1015, Asn1109, Asn1139, and Asn1298. The interval 1295-1314 (LPKNNSKDTESTPGSCSEDT) is disordered. Polar residues predominate over residues 1305 to 1314 (STPGSCSEDT). The 37-residue stretch at 1306–1342 (TPGSCSEDTCQNGGTCVPGANAHSCDCRPGFKGRHCE) folds into the EGF-like 15 domain. Cystine bridges form between Cys1310/Cys1321, Cys1315/Cys1330, and Cys1332/Cys1341.

In terms of processing, phosphorylated on serine and threonine residues. N-glycosylated. As to expression, expressed in liver.

The protein resides in the secreted. It is found in the extracellular space. It localises to the extracellular matrix. This chain is Sushi, nidogen and EGF-like domain-containing protein 1, found in Rattus norvegicus (Rat).